Here is a 282-residue protein sequence, read N- to C-terminus: Farnesyl diphosphate synthase (282 aa).

Isopentenyl diphosphate is bound by residues Lys45, Arg48, and His77. Positions 84 and 90 each coordinate Mg(2+). (2E)-geranyl diphosphate is bound at residue Arg95. Position 96 (Arg96) interacts with isopentenyl diphosphate. Positions 181, 182, and 220 each coordinate (2E)-geranyl diphosphate.

Belongs to the FPP/GGPP synthase family. Mg(2+) is required as a cofactor.

It is found in the cytoplasm. It catalyses the reaction isopentenyl diphosphate + (2E)-geranyl diphosphate = (2E,6E)-farnesyl diphosphate + diphosphate. This Buchnera aphidicola subsp. Acyrthosiphon pisum (strain APS) (Acyrthosiphon pisum symbiotic bacterium) protein is Farnesyl diphosphate synthase (ispA).